The sequence spans 176 residues: Inner membrane-spanning protein YciB (176 aa).

A run of 6 helical transmembrane segments spans residues 3–23, 24–44, 49–69, 72–92, 121–141, and 149–169; these read FLFDLFPIILFFVAFKVWGIF, TATAVAIVATLAQVAWVAFRH, TMLWVSLGVIVVFGGATLVLH, KFIQWKPTVLYWLFAIGLLAA, VAWALFFAVLGVANLYVVHNF, and FKLFGTTGAMVVFIILQSLWL.

This sequence belongs to the YciB family.

Its subcellular location is the cell inner membrane. Its function is as follows. Plays a role in cell envelope biogenesis, maintenance of cell envelope integrity and membrane homeostasis. This is Inner membrane-spanning protein YciB from Burkholderia orbicola (strain MC0-3).